The primary structure comprises 78 residues: MVKTITVSDDVYNELLRIKGKKSFSELLRELLREKKGNSVALKHIYGILNGEEYRETRKRLKELEKEFEKWKQFLTQV.

It belongs to the UPF0330 family.

Possibly the antitoxin component of a type II toxin-antitoxin (TA) system. Its cognate toxin is VapC4 (Potential). This chain is Putative antitoxin VapB4 (vapB4), found in Pyrococcus furiosus (strain ATCC 43587 / DSM 3638 / JCM 8422 / Vc1).